We begin with the raw amino-acid sequence, 434 residues long: MASAQEDLIDYEEEEELVQDQPAQEITPAADTAENGEKSDKKGSYVGIHSTGFRDFLLKPELLRAITDSGFEHPSEVQQVCIPQSILGTDVLCQAKSGMGKTAVFVLSTLQQIEPVDGEVSVLVLCHTRELAFQIKNEYARFSKYLPDVRTAVFYGGINIKQDMEAFKDKSKSPHIVVATPGRLNALVREKILKVNSVKHFVLDECDKLLESVDMRRDIQEVFRATPPQKQVMMFSATLSNEIRPICKKFMQNPLEIYVDDETKLTLHGLQQHYVKLEEKAKNRKINDLLDSLEFNQVVIFVKSVSRANELDRLLRECNFPSICIHGGLPQEERIKRYKAFKDFDKRICVATDVFGRGIDIERVNIVINYDMPDSPDSYLHRVGRAGRFGTKGLAITFSSSEEDSQILDKIQERFEVNITELPDEIDVGSYMNA.

Residues 1–43 (MASAQEDLIDYEEEEELVQDQPAQEITPAADTAENGEKSDKKG) form a disordered region. Residues 7 to 18 (DLIDYEEEEELV) are compositionally biased toward acidic residues. The Q motif motif lies at 51-79 (TGFRDFLLKPELLRAITDSGFEHPSEVQQ). Residues 82-257 (IPQSILGTDV…KKFMQNPLEI (176 aa)) form the Helicase ATP-binding domain. 95-102 (AKSGMGKT) lines the ATP pocket. The DECD box signature appears at 204–207 (DECD). The 162-residue stretch at 269–430 (GLQQHYVKLE…ELPDEIDVGS (162 aa)) folds into the Helicase C-terminal domain.

The protein belongs to the DEAD box helicase family. DECD subfamily. Interacts with mlo3 and rae1.

It is found in the nucleus. It catalyses the reaction ATP + H2O = ADP + phosphate + H(+). Its function is as follows. ATP-binding RNA helicase involved in transcription elongation and required for the export of mRNA out of the nucleus. SUB2 also plays a role in pre-mRNA splicing and spliceosome assembly. May be involved in rDNA and telomeric silencing, and maintenance of genome integrity. Links the mRNA adapter mlo3 to rae1 for targeting mRNA-protein complex to the proteins of the nucleoporin complex (NPC). In Schizosaccharomyces pombe (strain 972 / ATCC 24843) (Fission yeast), this protein is ATP-dependent RNA helicase uap56 (uap56).